We begin with the raw amino-acid sequence, 282 residues long: Glycine betaine transport system permease protein OpuAB (282 aa).

Over 1 to 18 (MDRLPRIPLADIIDRFVD) the chain is Extracellular. Residues 19–39 (WITMTFGGFFDGIANGLAAFV) traverse the membrane as a helical segment. Topologically, residues 40-44 (NGIVT) are cytoplasmic. The helical transmembrane segment at 45–65 (GLGFIPSILLTIIFAALAWWI) threads the bilayer. The Extracellular portion of the chain corresponds to 66–69 (STRG). The chain crosses the membrane as a helical span at residues 70-90 (IALFTLIGFLLIDYLGYWDPM). One can recognise an ABC transmembrane type-1 domain in the interval 90–269 (MLQTLALVLT…IVAITLDRIT (180 aa)). The Cytoplasmic portion of the chain corresponds to 91–93 (LQT). A helical membrane pass occupies residues 94 to 114 (LALVLTSVIISIVVGVPIGIW). Topologically, residues 115 to 137 (ASQKETVRRIVTPILDLMQTMPA) are extracellular. The chain crosses the membrane as a helical span at residues 138–158 (FVYLLPAIFFFNIGVVPGVVA). The Cytoplasmic portion of the chain corresponds to 159 to 215 (SVIFAMPPTIRMTVLGIKQVPADLIEATEAFGSTTAQRLFKVQLPLATKTILAGINQ). Residues 216–236 (SIMLALSMVVIAAMVGAPGLG) form a helical membrane-spanning segment. At 237-242 (SEVYSA) the chain is on the extracellular side. Residues 243 to 263 (VTQLKTGVGVEAGIAIVIVAI) form a helical membrane-spanning segment. Residues 264-282 (TLDRITQNIKVKKKSRGNA) lie on the Cytoplasmic side of the membrane.

Belongs to the binding-protein-dependent transport system permease family. CysTW subfamily. The complex is composed of two ATP-binding proteins (OpuAA), two transmembrane proteins (OpuAB) and a solute-binding protein (OpuAC).

Its subcellular location is the cell membrane. Its function is as follows. Involved in a multicomponent binding-protein-dependent transport system for glycine betaine; probably responsible for the translocation of the substrate across the membrane. The polypeptide is Glycine betaine transport system permease protein OpuAB (opuAB) (Bacillus subtilis (strain 168)).